Here is a 388-residue protein sequence, read N- to C-terminus: UPF0229 protein BH1031 (388 aa).

Positions 80–117 are disordered; sequence HVGQGDGDSQVGDVIARDPSAGQQGPGKGQGAGDQPGE. Residues 103–113 are compositionally biased toward gly residues; that stretch reads QGPGKGQGAGD.

Belongs to the UPF0229 family.

The polypeptide is UPF0229 protein BH1031 (Halalkalibacterium halodurans (strain ATCC BAA-125 / DSM 18197 / FERM 7344 / JCM 9153 / C-125) (Bacillus halodurans)).